Here is a 300-residue protein sequence, read N- to C-terminus: 4-hydroxy-tetrahydrodipicolinate synthase (300 aa).

Pyruvate is bound at residue T56. Y145 functions as the Proton donor/acceptor in the catalytic mechanism. K173 functions as the Schiff-base intermediate with substrate in the catalytic mechanism. V215 contacts pyruvate.

The protein belongs to the DapA family. In terms of assembly, homotetramer; dimer of dimers.

It is found in the cytoplasm. The enzyme catalyses L-aspartate 4-semialdehyde + pyruvate = (2S,4S)-4-hydroxy-2,3,4,5-tetrahydrodipicolinate + H2O + H(+). It functions in the pathway amino-acid biosynthesis; L-lysine biosynthesis via DAP pathway; (S)-tetrahydrodipicolinate from L-aspartate: step 3/4. Its function is as follows. Catalyzes the condensation of (S)-aspartate-beta-semialdehyde [(S)-ASA] and pyruvate to 4-hydroxy-tetrahydrodipicolinate (HTPA). The sequence is that of 4-hydroxy-tetrahydrodipicolinate synthase from Prochlorococcus marinus (strain AS9601).